The following is a 249-amino-acid chain: ATP synthase subunit a (249 aa).

A run of 5 helical transmembrane segments spans residues 33 to 53 (GQVI…SIAA), 92 to 112 (LPFI…GALI), 131 to 151 (INTT…AGIS), 196 to 216 (LVVA…LMAL), and 217 to 237 (GLFT…AYIH).

This sequence belongs to the ATPase A chain family. As to quaternary structure, F-type ATPases have 2 components, CF(1) - the catalytic core - and CF(0) - the membrane proton channel. CF(1) has five subunits: alpha(3), beta(3), gamma(1), delta(1), epsilon(1). CF(0) has four main subunits: a, b, b' and c.

It localises to the cellular thylakoid membrane. Key component of the proton channel; it plays a direct role in the translocation of protons across the membrane. The chain is ATP synthase subunit a from Microcystis aeruginosa (strain NIES-843 / IAM M-2473).